A 95-amino-acid polypeptide reads, in one-letter code: Antitoxin VapB (95 aa).

In terms of biological role, antitoxin component of a type II toxin-antitoxin (TA) system. Partially neutralizes the RNase activity of cognate toxin VapC. This chain is Antitoxin VapB, found in Rickettsia bellii (strain RML369-C).